A 319-amino-acid chain; its full sequence is Aspartate carbamoyltransferase catalytic subunit (319 aa).

Residues R59 and T60 each contribute to the carbamoyl phosphate site. L-aspartate is bound at residue K87. 3 residues coordinate carbamoyl phosphate: R109, H137, and Q140. L-aspartate is bound by residues R170 and R224. Carbamoyl phosphate contacts are provided by G265 and P266.

This sequence belongs to the aspartate/ornithine carbamoyltransferase superfamily. ATCase family. Heterododecamer (2C3:3R2) of six catalytic PyrB chains organized as two trimers (C3), and six regulatory PyrI chains organized as three dimers (R2).

The enzyme catalyses carbamoyl phosphate + L-aspartate = N-carbamoyl-L-aspartate + phosphate + H(+). It functions in the pathway pyrimidine metabolism; UMP biosynthesis via de novo pathway; (S)-dihydroorotate from bicarbonate: step 2/3. In terms of biological role, catalyzes the condensation of carbamoyl phosphate and aspartate to form carbamoyl aspartate and inorganic phosphate, the committed step in the de novo pyrimidine nucleotide biosynthesis pathway. The protein is Aspartate carbamoyltransferase catalytic subunit of Gemmatimonas aurantiaca (strain DSM 14586 / JCM 11422 / NBRC 100505 / T-27).